Reading from the N-terminus, the 86-residue chain is Serine protease inhibitor Kazal-type 9 (86 aa).

The first 19 residues, 1 to 19 (MRATAIVLLLALTLATMFS), serve as a signal peptide directing secretion. The Kazal-like domain maps to 26–86 (TKQMVDCSHY…TLKFVHFGKC (61 aa)). 3 cysteine pairs are disulfide-bonded: Cys32/Cys68, Cys46/Cys65, and Cys54/Cys86.

In terms of assembly, dimer. Interacts with KLK5 and KLK8. In terms of tissue distribution, skin. Highly expressed at sites of hyperkeratosis. Also detected in thymus, tonsils, testis, pancreas, liver, placenta and brain. Expressed at stratum granulosum and stratum corneum at palmar and plantar sites (at protein level).

Its subcellular location is the secreted. Serine protease inhibitor which specifically inhibits KLK5. May contribute to the regulation of the desquamation process in skin by inhibiting KLK5. The polypeptide is Serine protease inhibitor Kazal-type 9 (SPINK9) (Homo sapiens (Human)).